The following is a 156-amino-acid chain: Ribosomal RNA large subunit methyltransferase H (156 aa).

Residues Gly104 and 123 to 128 (LSALTL) each bind S-adenosyl-L-methionine.

It belongs to the RNA methyltransferase RlmH family. Homodimer.

It localises to the cytoplasm. The enzyme catalyses pseudouridine(1915) in 23S rRNA + S-adenosyl-L-methionine = N(3)-methylpseudouridine(1915) in 23S rRNA + S-adenosyl-L-homocysteine + H(+). Specifically methylates the pseudouridine at position 1915 (m3Psi1915) in 23S rRNA. The polypeptide is Ribosomal RNA large subunit methyltransferase H (Nitrosospira multiformis (strain ATCC 25196 / NCIMB 11849 / C 71)).